Reading from the N-terminus, the 273-residue chain is NAD(P)H-hydrate epimerase (273 aa).

In terms of domain architecture, YjeF N-terminal spans 52–260 (AQQIDQELFN…GIIQKYELNL (209 aa)). 105-109 (NNGGD) lines the (6S)-NADPHX pocket. Positions 106 and 170 each coordinate K(+). Residues 174–180 (GFSFKGE) and Asp-203 contribute to the (6S)-NADPHX site. Ser-206 serves as a coordination point for K(+).

This sequence belongs to the NnrE/AIBP family. K(+) is required as a cofactor.

It catalyses the reaction (6R)-NADHX = (6S)-NADHX. The enzyme catalyses (6R)-NADPHX = (6S)-NADPHX. Catalyzes the epimerization of the S- and R-forms of NAD(P)HX, a damaged form of NAD(P)H that is a result of enzymatic or heat-dependent hydration. This is a prerequisite for the S-specific NAD(P)H-hydrate dehydratase to allow the repair of both epimers of NAD(P)HX. In Branchiostoma floridae (Florida lancelet), this protein is NAD(P)H-hydrate epimerase.